The chain runs to 355 residues: uncharacterized protein (355 aa).

The disordered stretch occupies residues 1 to 61 (MNKKIEKNNN…PKRRGRRPKK (61 aa)). The span at 18–37 (YESNTTDNQLIMKKNANSGS) shows a compositional bias: polar residues.

This is an uncharacterized protein from Acanthamoeba polyphaga mimivirus (APMV).